A 256-amino-acid polypeptide reads, in one-letter code: tRNA-cytidine(32) 2-sulfurtransferase 1 (256 aa).

A PP-loop motif motif is present at residues 38-43; the sequence is SGGKDS. The [4Fe-4S] cluster site is built by C113, C116, and C204.

It belongs to the TtcA family. Homodimer. The cofactor is Mg(2+). [4Fe-4S] cluster is required as a cofactor.

The protein localises to the cytoplasm. The catalysed reaction is cytidine(32) in tRNA + S-sulfanyl-L-cysteinyl-[cysteine desulfurase] + AH2 + ATP = 2-thiocytidine(32) in tRNA + L-cysteinyl-[cysteine desulfurase] + A + AMP + diphosphate + H(+). It participates in tRNA modification. In terms of biological role, catalyzes the ATP-dependent 2-thiolation of cytidine in position 32 of tRNA, to form 2-thiocytidine (s(2)C32). The sulfur atoms are provided by the cysteine/cysteine desulfurase (IscS) system. The chain is tRNA-cytidine(32) 2-sulfurtransferase 1 from Francisella philomiragia subsp. philomiragia (strain ATCC 25017 / CCUG 19701 / FSC 153 / O#319-036).